The following is a 430-amino-acid chain: Tyrosine--tRNA ligase (430 aa).

Tyrosine 32 contacts L-tyrosine. A 'HIGH' region motif is present at residues 37–46 (PTADSLHIGH). Tyrosine 172 and glutamine 176 together coordinate L-tyrosine. The 'KMSKS' region motif lies at 232–236 (KFGKT). Lysine 235 contributes to the ATP binding site. The 69-residue stretch at 362-430 (ISLVDLLADA…KKSYYLIIVE (69 aa)) folds into the S4 RNA-binding domain.

Belongs to the class-I aminoacyl-tRNA synthetase family. TyrS type 1 subfamily. Homodimer.

Its subcellular location is the cytoplasm. It catalyses the reaction tRNA(Tyr) + L-tyrosine + ATP = L-tyrosyl-tRNA(Tyr) + AMP + diphosphate + H(+). Functionally, catalyzes the attachment of tyrosine to tRNA(Tyr) in a two-step reaction: tyrosine is first activated by ATP to form Tyr-AMP and then transferred to the acceptor end of tRNA(Tyr). The protein is Tyrosine--tRNA ligase of Porphyromonas gingivalis (strain ATCC BAA-308 / W83).